A 657-amino-acid polypeptide reads, in one-letter code: Glycogen debranching enzyme (657 aa).

D336 (nucleophile) is an active-site residue. The Proton donor role is filled by E371. The disordered stretch occupies residues 460 to 479 (ANGEENRDGTNNNYSNNHGK).

Belongs to the glycosyl hydrolase 13 family.

It catalyses the reaction Hydrolysis of (1-&gt;6)-alpha-D-glucosidic linkages to branches with degrees of polymerization of three or four glucose residues in limit dextrin.. It functions in the pathway glycan degradation; glycogen degradation. Removes maltotriose and maltotetraose chains that are attached by 1,6-alpha-linkage to the limit dextrin main chain, generating a debranched limit dextrin. This is Glycogen debranching enzyme from Escherichia coli O1:K1 / APEC.